A 619-amino-acid chain; its full sequence is TOX high mobility group box family member 4 (619 aa).

Disordered regions lie at residues 155-227 and 306-335; these read LSLG…QKPV and DPVP…TESP. Thr-176 carries the phosphothreonine modification. A phosphoserine mark is found at Ser-178 and Ser-182. Positions 183–193 are enriched in basic and acidic residues; it reads LHEDGVDDFRR. Residues 208–218 are compositionally biased toward basic residues; the sequence is KQKAPKKRKKK. The Nuclear localization signal motif lies at 213-218; that stretch reads KKRKKK. A DNA-binding region (HMG box) is located at residues 223–291; that stretch reads PQKPVSAYAL…EYLKALAAYK (69 aa). At Thr-313 the chain carries Phosphothreonine. Ser-315 is subject to Phosphoserine. Positions 320–335 are enriched in low complexity; the sequence is TAADPASPAPASTESP. An Asymmetric dimethylarginine modification is found at Arg-479. A phosphoserine mark is found at Ser-531, Ser-548, Ser-550, Ser-558, Ser-560, and Ser-565.

As to quaternary structure, component of the PNUTS-PP1 phosphatase complex, composed of PPP1R10/PNUTS, TOX4, WDR82 and PPP1CA or PPP1CB or PPP1CC. Interacts with PPP1R10/PNUTS. Interacts with FOXO1 and CREB1 (increased by cAMP); FOXO1 and CREB1 are required for full induction of TOX4-dependent activity and the interactions are inhibited by insulin.

It localises to the nucleus. The protein localises to the chromosome. In liver, recruited to target gene promoters following treatment with dexamethasone and cAMP. Binding is decreased in presence of insulin. Functionally, transcription factor that modulates cell fate reprogramming from the somatic state to the pluripotent and neuronal fate. In liver, controls the expression of hormone-regulated gluconeogenic genes such as G6PC1 and PCK1. This regulation is independent of the insulin receptor activation. Also acts as a regulatory component of protein phosphatase 1 (PP1) complexes. Component of the PNUTS-PP1 protein phosphatase complex, a PP1 complex that regulates RNA polymerase II transcription pause-release. PNUTS-PP1 also plays a role in the control of chromatin structure and cell cycle progression during the transition from mitosis into interphase. This Mus musculus (Mouse) protein is TOX high mobility group box family member 4.